The following is a 1273-amino-acid chain: Lysine-specific histone demethylase 2 (1273 aa).

Residues 199 to 230 (ENFFDANSPSSQQFPSTYPSRSQNPLSSSGDG) are compositionally biased toward polar residues. Residues 199-237 (ENFFDANSPSSQQFPSTYPSRSQNPLSSSGDGSTAIHAG) form a disordered region. A coiled-coil region spans residues 247–307 (FSNYPYPLDA…LSKSVDNAVL (61 aa)). The region spanning 394-490 (AAEAARKCNL…YGCLSFDSSF (97 aa)) is the SWIRM domain. Residues 509 to 551 (IAVV…ILEA), Thr-517, Glu-550, Arg-558, and 572 to 573 (TQ) contribute to the FAD site. Residues 542–1198 (LPPKVIILEA…GKILRYQRLT (657 aa)) form a demethylase activity region. Positions 571–596 (ATQINHHTSNSNSISSNSTSLNPKDV) are disordered. The span at 574 to 590 (INHHTSNSNSISSNSTS) shows a compositional bias: low complexity. The stretch at 681 to 767 (SVRISWISQF…NTVDTDFSKD (87 aa)) forms a coiled coil. The segment at residues 1115 to 1195 (SKPNANPFLL…AYAGKILRYQ (81 aa)) is a DNA-binding region (HMG box). FAD-binding positions include Asp-1147 and 1156 to 1157 (ET). Residues 1215–1273 (KCQDEPIPDDEARLFMQAQREEEQRKQTQDDNISKSREASDEEYHDDGSSDSGYNGTRY) form a disordered region. Residues 1233–1253 (QREEEQRKQTQDDNISKSREA) show a composition bias toward basic and acidic residues. Over residues 1264 to 1273 (SDSGYNGTRY) the composition is skewed to polar residues.

Belongs to the flavin monoamine oxidase family. Component of the SWM histone demethylase complex composed of at least lsd1, lsd2, phf1 and phf2. Interacts directly with lsd1. FAD serves as cofactor.

The protein localises to the nucleus. Its function is as follows. Catalytic component of the SWM histone demethylase complex that specifically demethylates H3K9me2, a specific tag for epigenetic transcriptional activation, thereby acting as a corepressor. Acts by oxidizing the substrate by FAD to generate the corresponding imine that is subsequently hydrolyzed. Has a role in regulating heterochromatin propagation and euchromatic transcription. Also has a gene activating role. The protein is Lysine-specific histone demethylase 2 (lsd2) of Schizosaccharomyces pombe (strain 972 / ATCC 24843) (Fission yeast).